Here is a 306-residue protein sequence, read N- to C-terminus: NAD kinase 1 (306 aa).

The active-site Proton acceptor is Asp-67. NAD(+) is bound by residues 67–68, 149–150, and Asp-181; these read DG and ND.

It belongs to the NAD kinase family. Requires a divalent metal cation as cofactor.

It is found in the cytoplasm. The enzyme catalyses NAD(+) + ATP = ADP + NADP(+) + H(+). Involved in the regulation of the intracellular balance of NAD and NADP, and is a key enzyme in the biosynthesis of NADP. Catalyzes specifically the phosphorylation on 2'-hydroxyl of the adenosine moiety of NAD to yield NADP. The polypeptide is NAD kinase 1 (Synechococcus sp. (strain ATCC 27144 / PCC 6301 / SAUG 1402/1) (Anacystis nidulans)).